Here is a 288-residue protein sequence, read N- to C-terminus: Diaminopimelate epimerase (288 aa).

Positions 13, 46, and 66 each coordinate substrate. The Proton donor role is filled by cysteine 75. Substrate-binding positions include 76–77 (GN), asparagine 166, asparagine 199, and 217–218 (ER). Residue cysteine 226 is the Proton acceptor of the active site. 227–228 (GT) serves as a coordination point for substrate.

The protein belongs to the diaminopimelate epimerase family. Homodimer.

The protein localises to the cytoplasm. It carries out the reaction (2S,6S)-2,6-diaminopimelate = meso-2,6-diaminopimelate. It participates in amino-acid biosynthesis; L-lysine biosynthesis via DAP pathway; DL-2,6-diaminopimelate from LL-2,6-diaminopimelate: step 1/1. Catalyzes the stereoinversion of LL-2,6-diaminopimelate (L,L-DAP) to meso-diaminopimelate (meso-DAP), a precursor of L-lysine and an essential component of the bacterial peptidoglycan. This Cupriavidus necator (strain ATCC 17699 / DSM 428 / KCTC 22496 / NCIMB 10442 / H16 / Stanier 337) (Ralstonia eutropha) protein is Diaminopimelate epimerase.